The chain runs to 139 residues: Probable disulfide formation protein C 2 (139 aa).

A helical transmembrane segment spans residues 6–25; it reads KYHIAIAWMIATSAMLISLF. A disulfide bridge links cysteine 35 with cysteine 38. The next 2 membrane-spanning stretches (helical) occupy residues 40-59 and 66-83; these read YQRM…MYRK and YAFP…YQIT. Cysteines 95 and 101 form a disulfide. A helical transmembrane segment spans residues 110-133; sequence GFISIPMLSFIGFLVIIILIYIES.

This sequence belongs to the DsbB family. BdbC subfamily.

Its subcellular location is the cell membrane. Its function is as follows. Required for disulfide bond formation in some proteins. This Bacillus cereus (strain ATCC 10987 / NRS 248) protein is Probable disulfide formation protein C 2 (bdbC2).